Reading from the N-terminus, the 569-residue chain is F-box/WD repeat-containing protein 5 (569 aa).

The F-box domain occupies 3–49; sequence EGGMPLLPDSLVYQIFLSLGPADVLAAGLVCRQWQAVSRDEFLWREQ. A WD 1 repeat occupies 90–129; the sequence is EHTDQVLHLSFSHSGYQFASCSKDCTVKIWNNDLTISLLH. Ser-151 carries the post-translational modification Phosphoserine; by PLK4. A D-box motif is present at residues 308 to 316; sequence RRVFDSVLD. 2 WD repeats span residues 470–509 and 511–551; these read TPND…CLAK and RHED…RVLQ.

It belongs to the FBXW5 family. As to quaternary structure, part of the SCF (SKP1-CUL1-F-box) E3 ubiquitin-protein ligase complex SCF(FBXW5) composed of CUL1, SKP1, RBX1 and FBXW5. Component of the DCX(FBXW5) E3 ubiquitin ligase complex, at least composed of (CUL4A or CUL4B), DDB1, FBXW5 and RBX1. Interacts with CDC20, EPS8, TSC1, TSC2 and SASS6. Interacts with TNFAIP8L1; TNFAIP8L1 competes with TSC2 to bind FBXW5 increasing TSC2 stability by preventing its ubiquitination. Phosphorylated at Ser-151 by PLK4 during the G1/S transition, leading to inhibit its ability to ubiquitinate SASS6. Post-translationally, ubiquitinated and degraded by the APC/C complex during mitosis and G1 phase.

It is found in the cytoplasm. Its pathway is protein modification; protein ubiquitination. In terms of biological role, substrate recognition component of both SCF (SKP1-CUL1-F-box protein) and DCX (DDB1-CUL4-X-box) E3 ubiquitin-protein ligase complexes. Substrate recognition component of the SCF(FBXW5) E3 ubiquitin-protein ligase complex which mediates the ubiquitination and subsequent proteasomal degradation of SASS6 during S phase, leading to prevent centriole reduplication. The SCF(FBXW5) complex also mediates ubiquitination and degradation of actin-regulator EPS8 during G2 phase, leading to the transient degradation of EPS8 and subsequent cell shape changes required to allow mitotic progression. Substrate-specific adapter of the DCX(FBXW5) E3 ubiquitin-protein ligase complex which mediates the polyubiquitination and subsequent degradation of TSC2. May also act as a negative regulator of MAP3K7/TAK1 signaling in the interleukin-1B (IL1B) signaling pathway. The chain is F-box/WD repeat-containing protein 5 (Fbxw5) from Rattus norvegicus (Rat).